Consider the following 335-residue polypeptide: Biotin synthase (335 aa).

The Radical SAM core domain maps to 47-276 (FYGKKVKLNM…SKEIRISGGR (230 aa)). [4Fe-4S] cluster-binding residues include cysteine 65, cysteine 69, and cysteine 72. The [2Fe-2S] cluster site is built by cysteine 109, cysteine 141, cysteine 201, and arginine 271.

This sequence belongs to the radical SAM superfamily. Biotin synthase family. Homodimer. [4Fe-4S] cluster serves as cofactor. [2Fe-2S] cluster is required as a cofactor.

The catalysed reaction is (4R,5S)-dethiobiotin + (sulfur carrier)-SH + 2 reduced [2Fe-2S]-[ferredoxin] + 2 S-adenosyl-L-methionine = (sulfur carrier)-H + biotin + 2 5'-deoxyadenosine + 2 L-methionine + 2 oxidized [2Fe-2S]-[ferredoxin]. It participates in cofactor biosynthesis; biotin biosynthesis; biotin from 7,8-diaminononanoate: step 2/2. Functionally, catalyzes the conversion of dethiobiotin (DTB) to biotin by the insertion of a sulfur atom into dethiobiotin via a radical-based mechanism. This Bacillus subtilis subsp. natto protein is Biotin synthase.